We begin with the raw amino-acid sequence, 220 residues long: Type IV major pilin protein PilA (220 aa).

Residues Met1–Gly12 constitute a propeptide, leader sequence. Phe13 is subject to N-methylphenylalanine. A helical transmembrane segment spans residues Phe13–Ile33.

The protein belongs to the N-Me-Phe pilin family.

It is found in the fimbrium. The protein localises to the membrane. Its activity is regulated as follows. The two-component PilS2/PilR2 is required for proper assembly of T4P and regulation. Major component of the type IV pili that are required for social gliding motility through cycles of extension and retraction. Extended pili are composed of thousands of copies of PilA and retract upon binding to extracellular polysaccharides and thereby pull the cell forward. The polypeptide is Type IV major pilin protein PilA (pilA) (Myxococcus xanthus (strain DK1622)).